The primary structure comprises 412 residues: 43 kDa receptor-associated protein of the synapse (412 aa).

Residue Gly2 is the site of N-myristoyl glycine attachment. TPR repeat units lie at residues 6–39, 83–116, 123–156, 163–196, 206–239, 246–279, and 286–319; these read TKQQIEKGLHLYQSNQTEKALQVWMRVLEKSADP, TEGYLNLARSNEKLCEFQKTISYCKTCLNMQGTT, GQVSLSMGNAFLGLSIFQKALECFEKALRYAHNN, CRVCCSLGNFYAQIKDYEKALFFPCKAAELVNDY, AMSQYHMAVAYRKLGRLADAMDCCEESMKIALQH, ALCLLCFADIHLSRRDVQTAFPRYDSAMSIMTEI, and IQVLLGVAKCWMIQKELDKALESIEKAQELAEGL. Position 196 is a phosphotyrosine (Tyr196). The RING-type zinc-finger motif lies at 363 to 403; sequence CGMCGESIGEKNNQLQALPCSHFFHLKCLQTNGTRGCPNCR.

Belongs to the RAPsyn family. Expressed in muscle fibers and in neurons.

Its subcellular location is the cell membrane. It is found in the postsynaptic cell membrane. The protein resides in the cytoplasm. It localises to the cytoskeleton. Functionally, postsynaptic protein required for clustering of nicotinic acetylcholine receptors (nAChRs) at the neuromuscular junction. It may link the receptor to the underlying postsynaptic cytoskeleton, possibly by direct association with actin or spectrin. The chain is 43 kDa receptor-associated protein of the synapse (RAPSN) from Gallus gallus (Chicken).